The following is a 392-amino-acid chain: UPF0229 protein CPE1333 (392 aa).

Residues 75-100 are disordered; that stretch reads VTTGTGEERRGDRISSDKRKAISNNK. Residues 80-94 are compositionally biased toward basic and acidic residues; it reads GEERRGDRISSDKRK.

Belongs to the UPF0229 family.

In Clostridium perfringens (strain 13 / Type A), this protein is UPF0229 protein CPE1333.